We begin with the raw amino-acid sequence, 455 residues long: Tubby-like F-box protein 1 (455 aa).

Residues 54 to 112 (ETPWANLPPELLRDVIKRLEESESVWPARRHVVACASVCRSWRDMCKEIVQSPELSGKI) form the F-box domain. The disordered stretch occupies residues 386–414 (QPQPQPQPQPQPQPLTQPQPSGQTDGPDK). Residues 388–402 (QPQPQPQPQPQPLTQ) show a composition bias toward pro residues.

This sequence belongs to the TUB family. Ubiquitous.

This chain is Tubby-like F-box protein 1, found in Arabidopsis thaliana (Mouse-ear cress).